Reading from the N-terminus, the 179-residue chain is uncharacterized protein (179 aa).

3 consecutive transmembrane segments (helical) span residues 29-49 (LLGI…GPLI), 76-96 (AKHM…DAYS), and 97-117 (GAII…LLWA).

Belongs to the DP1 family.

Its subcellular location is the membrane. This is an uncharacterized protein from Encephalitozoon cuniculi (strain GB-M1) (Microsporidian parasite).